The chain runs to 432 residues: Adenylosuccinate synthetase (432 aa).

Residues Gly-16–Lys-22 and Gly-44–Met-46 each bind GTP. Asp-17 serves as the catalytic Proton acceptor. Positions 17 and 44 each coordinate Mg(2+). IMP is bound by residues Asp-17–Lys-20, Asn-42–His-45, Thr-132, Arg-146, Gln-226, Thr-241, and Arg-305. His-45 serves as the catalytic Proton donor. Residue Leu-301–Arg-307 participates in substrate binding. GTP contacts are provided by residues Arg-307, Leu-333–Asp-335, and Ser-415–Gly-417.

This sequence belongs to the adenylosuccinate synthetase family. As to quaternary structure, homodimer. It depends on Mg(2+) as a cofactor.

It is found in the cytoplasm. The catalysed reaction is IMP + L-aspartate + GTP = N(6)-(1,2-dicarboxyethyl)-AMP + GDP + phosphate + 2 H(+). Its pathway is purine metabolism; AMP biosynthesis via de novo pathway; AMP from IMP: step 1/2. Its function is as follows. Plays an important role in the de novo pathway of purine nucleotide biosynthesis. Catalyzes the first committed step in the biosynthesis of AMP from IMP. The sequence is that of Adenylosuccinate synthetase from Mycoplasma mycoides subsp. mycoides SC (strain CCUG 32753 / NCTC 10114 / PG1).